The sequence spans 283 residues: 4-hydroxy-3-methylbut-2-enyl diphosphate reductase (283 aa).

Position 12 (Cys-12) interacts with [4Fe-4S] cluster. (2E)-4-hydroxy-3-methylbut-2-enyl diphosphate is bound by residues His-40 and His-73. Dimethylallyl diphosphate-binding residues include His-40 and His-73. Isopentenyl diphosphate contacts are provided by His-40 and His-73. Cys-95 serves as a coordination point for [4Fe-4S] cluster. (2E)-4-hydroxy-3-methylbut-2-enyl diphosphate is bound at residue His-123. His-123 contributes to the dimethylallyl diphosphate binding site. His-123 provides a ligand contact to isopentenyl diphosphate. Residue Glu-125 is the Proton donor of the active site. Position 161 (Thr-161) interacts with (2E)-4-hydroxy-3-methylbut-2-enyl diphosphate. Position 189 (Cys-189) interacts with [4Fe-4S] cluster. The (2E)-4-hydroxy-3-methylbut-2-enyl diphosphate site is built by Ser-217, Asn-219, and Ser-261. Dimethylallyl diphosphate contacts are provided by Ser-217, Asn-219, and Ser-261. 3 residues coordinate isopentenyl diphosphate: Ser-217, Asn-219, and Ser-261.

This sequence belongs to the IspH family. The cofactor is [4Fe-4S] cluster.

The catalysed reaction is isopentenyl diphosphate + 2 oxidized [2Fe-2S]-[ferredoxin] + H2O = (2E)-4-hydroxy-3-methylbut-2-enyl diphosphate + 2 reduced [2Fe-2S]-[ferredoxin] + 2 H(+). It carries out the reaction dimethylallyl diphosphate + 2 oxidized [2Fe-2S]-[ferredoxin] + H2O = (2E)-4-hydroxy-3-methylbut-2-enyl diphosphate + 2 reduced [2Fe-2S]-[ferredoxin] + 2 H(+). The protein operates within isoprenoid biosynthesis; dimethylallyl diphosphate biosynthesis; dimethylallyl diphosphate from (2E)-4-hydroxy-3-methylbutenyl diphosphate: step 1/1. Its pathway is isoprenoid biosynthesis; isopentenyl diphosphate biosynthesis via DXP pathway; isopentenyl diphosphate from 1-deoxy-D-xylulose 5-phosphate: step 6/6. In terms of biological role, catalyzes the conversion of 1-hydroxy-2-methyl-2-(E)-butenyl 4-diphosphate (HMBPP) into a mixture of isopentenyl diphosphate (IPP) and dimethylallyl diphosphate (DMAPP). Acts in the terminal step of the DOXP/MEP pathway for isoprenoid precursor biosynthesis. In Geobacter sp. (strain M21), this protein is 4-hydroxy-3-methylbut-2-enyl diphosphate reductase.